We begin with the raw amino-acid sequence, 347 residues long: Photosystem II protein D1 (347 aa).

3 helical membrane-spanning segments follow: residues 31–48, 120–135, and 144–158; these read YIGW…LAII, HFIG…EWEF, and WIYL…AATA. Histidine 120 contacts chlorophyll a. A pheophytin a-binding site is contributed by tryptophan 128. [CaMn4O5] cluster is bound by residues aspartate 172 and glutamate 191. A helical transmembrane segment spans residues 199–220; that stretch reads FHILGVAGVFGGSLFSAMHGSL. Residue histidine 200 participates in chlorophyll a binding. A quinone contacts are provided by residues histidine 217 and 266-267; that span reads SF. A Fe cation-binding site is contributed by histidine 217. Histidine 274 is a Fe cation binding site. A helical membrane pass occupies residues 276–290; the sequence is FLAAWPVIGIWFTAL. 3 residues coordinate [CaMn4O5] cluster: histidine 334, glutamate 335, and aspartate 344.

The protein belongs to the reaction center PufL/M/PsbA/D family. In terms of assembly, PSII is composed of 1 copy each of membrane proteins PsbA, PsbB, PsbC, PsbD, PsbE, PsbF, PsbH, PsbI, PsbJ, PsbK, PsbL, PsbM, PsbT, PsbX, PsbY, PsbZ, Psb30/Ycf12, at least 3 peripheral proteins of the oxygen-evolving complex and a large number of cofactors. It forms dimeric complexes. The cofactor is The D1/D2 heterodimer binds P680, chlorophylls that are the primary electron donor of PSII, and subsequent electron acceptors. It shares a non-heme iron and each subunit binds pheophytin, quinone, additional chlorophylls, carotenoids and lipids. D1 provides most of the ligands for the Mn4-Ca-O5 cluster of the oxygen-evolving complex (OEC). There is also a Cl(-1) ion associated with D1 and D2, which is required for oxygen evolution. The PSII complex binds additional chlorophylls, carotenoids and specific lipids.. Tyr-163 forms a radical intermediate that is referred to as redox-active TyrZ, YZ or Y-Z.

The protein localises to the plastid. Its subcellular location is the chloroplast thylakoid membrane. It carries out the reaction 2 a plastoquinone + 4 hnu + 2 H2O = 2 a plastoquinol + O2. Functionally, photosystem II (PSII) is a light-driven water:plastoquinone oxidoreductase that uses light energy to abstract electrons from H(2)O, generating O(2) and a proton gradient subsequently used for ATP formation. It consists of a core antenna complex that captures photons, and an electron transfer chain that converts photonic excitation into a charge separation. The D1/D2 (PsbA/PsbD) reaction center heterodimer binds P680, the primary electron donor of PSII as well as several subsequent electron acceptors. In Alexandrium tamarense (Red tide dinoflagellate), this protein is Photosystem II protein D1.